The sequence spans 253 residues: 5'/3'-nucleotidase SurE (253 aa).

Positions 8, 9, 39, and 92 each coordinate a divalent metal cation.

Belongs to the SurE nucleotidase family. It depends on a divalent metal cation as a cofactor.

It is found in the cytoplasm. It carries out the reaction a ribonucleoside 5'-phosphate + H2O = a ribonucleoside + phosphate. It catalyses the reaction a ribonucleoside 3'-phosphate + H2O = a ribonucleoside + phosphate. The enzyme catalyses [phosphate](n) + H2O = [phosphate](n-1) + phosphate + H(+). Functionally, nucleotidase with a broad substrate specificity as it can dephosphorylate various ribo- and deoxyribonucleoside 5'-monophosphates and ribonucleoside 3'-monophosphates with highest affinity to 3'-AMP. Also hydrolyzes polyphosphate (exopolyphosphatase activity) with the preference for short-chain-length substrates (P20-25). Might be involved in the regulation of dNTP and NTP pools, and in the turnover of 3'-mononucleotides produced by numerous intracellular RNases (T1, T2, and F) during the degradation of various RNAs. The chain is 5'/3'-nucleotidase SurE from Escherichia fergusonii (strain ATCC 35469 / DSM 13698 / CCUG 18766 / IAM 14443 / JCM 21226 / LMG 7866 / NBRC 102419 / NCTC 12128 / CDC 0568-73).